The primary structure comprises 64 residues: Translation machinery-associated protein 7 homolog (64 aa).

Residues 1 to 64 (MSGRQGGKAK…GGGIKKSGKK (64 aa)) form a disordered region. A coiled-coil region spans residues 21–50 (DLSEEDVEFKKKQQEEAKKIKEMAAKAGQR). A compositionally biased stretch (basic and acidic residues) spans 28–44 (EFKKKQQEEAKKIKEMA). A compositionally biased stretch (gly residues) spans 53-64 (LLGGGIKKSGKK).

It belongs to the TMA7 family.

This Caenorhabditis elegans protein is Translation machinery-associated protein 7 homolog.